The primary structure comprises 143 residues: Transcriptional regulator MraZ (143 aa).

2 consecutive SpoVT-AbrB domains span residues 5 to 47 (EYQH…PQEE) and 76 to 119 (ASEC…SKSE).

The protein belongs to the MraZ family. In terms of assembly, forms oligomers.

The protein resides in the cytoplasm. Its subcellular location is the nucleoid. This Listeria welshimeri serovar 6b (strain ATCC 35897 / DSM 20650 / CCUG 15529 / CIP 8149 / NCTC 11857 / SLCC 5334 / V8) protein is Transcriptional regulator MraZ.